We begin with the raw amino-acid sequence, 542 residues long: Membrane protein insertase YidC (542 aa).

The chain crosses the membrane as a helical span at residues 6–26; that stretch reads NILLIGLLFVSFLLWQQWQAD. Over residues 32-41 the composition is skewed to polar residues; the sequence is VAQTQSSVAP. The segment at 32 to 57 is disordered; that stretch reads VAQTQSSVAPSTVADAHSSDVPDADS. 5 helical membrane-spanning segments follow: residues 326–346, 350–370, 421–441, 458–478, and 501–521; these read LVVD…LLMF, FVGN…GMLY, GGCL…WVLL, LSVQ…MFIM, and VIFT…WLVG.

The protein belongs to the OXA1/ALB3/YidC family. Type 1 subfamily. In terms of assembly, interacts with the Sec translocase complex via SecD. Specifically interacts with transmembrane segments of nascent integral membrane proteins during membrane integration.

It localises to the cell inner membrane. In terms of biological role, required for the insertion and/or proper folding and/or complex formation of integral membrane proteins into the membrane. Involved in integration of membrane proteins that insert both dependently and independently of the Sec translocase complex, as well as at least some lipoproteins. Aids folding of multispanning membrane proteins. The sequence is that of Membrane protein insertase YidC from Shewanella piezotolerans (strain WP3 / JCM 13877).